Reading from the N-terminus, the 295-residue chain is Protease HtpX (295 aa).

A run of 2 helical transmembrane segments spans residues 4 to 24 (ILLF…TLSL) and 41 to 61 (SSLL…SLFI). Zn(2+) is bound at residue H147. The active site involves E148. Position 151 (H151) interacts with Zn(2+). The next 2 helical transmembrane spans lie at 158-178 (VTLA…ARII) and 199-219 (VATI…VMWF). Residue E224 coordinates Zn(2+).

Belongs to the peptidase M48B family. Zn(2+) is required as a cofactor.

The protein localises to the cell inner membrane. The sequence is that of Protease HtpX from Pseudomonas putida (strain ATCC 47054 / DSM 6125 / CFBP 8728 / NCIMB 11950 / KT2440).